The chain runs to 474 residues: Aspartyl/glutamyl-tRNA(Asn/Gln) amidotransferase subunit B (474 aa).

This sequence belongs to the GatB/GatE family. GatB subfamily. Heterotrimer of A, B and C subunits.

It carries out the reaction L-glutamyl-tRNA(Gln) + L-glutamine + ATP + H2O = L-glutaminyl-tRNA(Gln) + L-glutamate + ADP + phosphate + H(+). The catalysed reaction is L-aspartyl-tRNA(Asn) + L-glutamine + ATP + H2O = L-asparaginyl-tRNA(Asn) + L-glutamate + ADP + phosphate + 2 H(+). In terms of biological role, allows the formation of correctly charged Asn-tRNA(Asn) or Gln-tRNA(Gln) through the transamidation of misacylated Asp-tRNA(Asn) or Glu-tRNA(Gln) in organisms which lack either or both of asparaginyl-tRNA or glutaminyl-tRNA synthetases. The reaction takes place in the presence of glutamine and ATP through an activated phospho-Asp-tRNA(Asn) or phospho-Glu-tRNA(Gln). The protein is Aspartyl/glutamyl-tRNA(Asn/Gln) amidotransferase subunit B of Wolbachia pipientis wMel.